Consider the following 181-residue polypeptide: Transcription factor bHLH167 (181 aa).

The tract at residues M1–R22 is disordered. Positions S14–L63 constitute a bHLH domain.

This sequence belongs to the bHLH protein family.

The protein localises to the nucleus. This chain is Transcription factor bHLH167, found in Arabidopsis thaliana (Mouse-ear cress).